Here is a 447-residue protein sequence, read N- to C-terminus: N-succinylarginine dihydrolase (447 aa).

Substrate is bound by residues 19–28 (AGLSFGNEAS), N110, and 137–138 (HR). Residue E174 is part of the active site. R212 contributes to the substrate binding site. Residue H248 is part of the active site. D250 and N359 together coordinate substrate. The active-site Nucleophile is C365.

It belongs to the succinylarginine dihydrolase family. In terms of assembly, homodimer.

The enzyme catalyses N(2)-succinyl-L-arginine + 2 H2O + 2 H(+) = N(2)-succinyl-L-ornithine + 2 NH4(+) + CO2. The protein operates within amino-acid degradation; L-arginine degradation via AST pathway; L-glutamate and succinate from L-arginine: step 2/5. Its function is as follows. Catalyzes the hydrolysis of N(2)-succinylarginine into N(2)-succinylornithine, ammonia and CO(2). This is N-succinylarginine dihydrolase from Escherichia coli O7:K1 (strain IAI39 / ExPEC).